We begin with the raw amino-acid sequence, 269 residues long: Phosphonoacetaldehyde hydrolase (269 aa).

Aspartate 10 functions as the Nucleophile in the catalytic mechanism. Aspartate 10 and alanine 12 together coordinate Mg(2+). The active-site Schiff-base intermediate with substrate is the lysine 52. Residue aspartate 186 coordinates Mg(2+).

Belongs to the HAD-like hydrolase superfamily. PhnX family. In terms of assembly, homodimer. Requires Mg(2+) as cofactor.

It catalyses the reaction phosphonoacetaldehyde + H2O = acetaldehyde + phosphate + H(+). Functionally, involved in phosphonate degradation. This Salmonella agona (strain SL483) protein is Phosphonoacetaldehyde hydrolase.